A 186-amino-acid polypeptide reads, in one-letter code: Elongation factor P (186 aa).

It belongs to the elongation factor P family.

The protein resides in the cytoplasm. Its pathway is protein biosynthesis; polypeptide chain elongation. Functionally, involved in peptide bond synthesis. Stimulates efficient translation and peptide-bond synthesis on native or reconstituted 70S ribosomes in vitro. Probably functions indirectly by altering the affinity of the ribosome for aminoacyl-tRNA, thus increasing their reactivity as acceptors for peptidyl transferase. In Neisseria gonorrhoeae (strain NCCP11945), this protein is Elongation factor P.